Reading from the N-terminus, the 702-residue chain is Elongation factor G (702 aa).

Positions 8 to 290 constitute a tr-type G domain; the sequence is CQYRNIGISA…AIIEYLPAPN (283 aa). GTP-binding positions include 17 to 24, 88 to 92, and 142 to 145; these read AHIDAGKT, DTPGH, and NKMD.

It belongs to the TRAFAC class translation factor GTPase superfamily. Classic translation factor GTPase family. EF-G/EF-2 subfamily.

It localises to the cytoplasm. Functionally, catalyzes the GTP-dependent ribosomal translocation step during translation elongation. During this step, the ribosome changes from the pre-translocational (PRE) to the post-translocational (POST) state as the newly formed A-site-bound peptidyl-tRNA and P-site-bound deacylated tRNA move to the P and E sites, respectively. Catalyzes the coordinated movement of the two tRNA molecules, the mRNA and conformational changes in the ribosome. The sequence is that of Elongation factor G from Buchnera aphidicola subsp. Schizaphis graminum (strain Sg).